The primary structure comprises 1104 residues: SWI/SNF complex subunit SMARCC1 (1104 aa).

Residues 27-301 (LAVYRRKDGG…PVSFRQRIST (275 aa)) form a marR-like, BRCT and chromo domains module region. The MarR-like domain maps to 37–163 (PASKFWESPD…IEKTLVQNNC (127 aa)). The BRCT; N-terminus domain maps to 167 to 210 (PNIYLIPDIDLKLANKLKDIIKRHQGTFTDEKSKASHHIYPYPS). A Glycyl lysine isopeptide (Lys-Gly) (interchain with G-Cter in SUMO2) cross-link involves residue Lys-178. Residues 216–244 (EWLRPVMRRDKQVLVHWGFYPDSYDTWVH) form the Chromo domain. Residues 260–284 (KPWKVHVKWILDTDVFNEWMNEEDY) form the BRCT; C-terminus domain. Positions 295 to 445 (FRQRISTKNE…PGEDNVTEQT (151 aa)) are disordered. The span at 301–317 (TKNEEPVRSPERRDRKA) shows a compositional bias: basic and acidic residues. A phosphoserine mark is found at Ser-309, Ser-327, and Ser-329. The residue at position 334 (Thr-334) is a Phosphothreonine. Residues Lys-344 and Lys-345 each carry the N6-acetyllysine modification. Phosphoserine is present on Ser-349. An N6-acetyllysine modification is found at Lys-353. At Ser-356 the chain carries Phosphoserine. Lys-358 carries the post-translational modification N6-acetyllysine; alternate. Lys-358 is covalently cross-linked (Glycyl lysine isopeptide (Lys-Gly) (interchain with G-Cter in SUMO2); alternate). At Thr-397 the chain carries Phosphothreonine. An SWIRM domain is found at 448–545 (IIIPSYASWF…YQVDPESRPM (98 aa)). A Phosphoserine modification is found at Ser-572. Lys-591 is covalently cross-linked (Glycyl lysine isopeptide (Lys-Gly) (interchain with G-Cter in SUMO2)). In terms of domain architecture, SANT spans 617-668 (SAGREWTEQETLLLLEALEMYKDDWNKVSEHVGSRTQDECILHFLRLPIEDP). A Glycyl lysine isopeptide (Lys-Gly) (interchain with G-Cter in SUMO2) cross-link involves residue Lys-738. The interval 744–859 (ARASGKVDPT…DAGKKKVEHE (116 aa)) is disordered. Ser-775 bears the Phosphoserine mark. Acidic residues predominate over residues 775–784 (SEEEKMETDP). Over residues 788–859 (QPEKAENKVE…DAGKKKVEHE (72 aa)) the composition is skewed to basic and acidic residues. Lys-795 is covalently cross-linked (Glycyl lysine isopeptide (Lys-Gly) (interchain with G-Cter in SUMO2)). 2 positions are modified to phosphoserine: Ser-821 and Ser-824. Glycyl lysine isopeptide (Lys-Gly) (interchain with G-Cter in SUMO2) cross-links involve residues Lys-828 and Lys-855. Residues 909–945 (KLRHFEELETIMDREKEALEQQRQQLLTERQNFHMEQ) are a coiled coil. Lys-947 is modified (N6-acetyllysine). Disordered regions lie at residues 955 to 1021 (QQME…PGPG) and 1041 to 1104 (IHPT…SATP). A compositionally biased stretch (low complexity) spans 956–973 (QMEQQQQHGQTPQQAHQH). 2 stretches are compositionally biased toward pro residues: residues 994–1017 (QQPPPYPLMHHQMPPPHPPQPGQI) and 1048–1057 (PTPPGMPPMP). At Arg-1064 the chain carries Asymmetric dimethylarginine. The span at 1073–1104 (MYPPPPQQQQPPPPADGVPPPPAPGPPASATP) shows a compositional bias: pro residues.

It belongs to the SMARCC family. Component of the multiprotein chromatin-remodeling complexes SWI/SNF: SWI/SNF-A (BAF), SWI/SNF-B (PBAF) and related complexes. The canonical complex contains a catalytic subunit (either SMARCA4/BRG1/BAF190A or SMARCA2/BRM/BAF190B) and at least SMARCE1, ACTL6A/BAF53, SMARCC1/BAF155, SMARCC2/BAF170, and SMARCB1/SNF5/BAF47. Other subunits specific to each of the complexes may also be present permitting several possible combinations developmentally and tissue specific. Component of the BAF complex, which includes at least actin (ACTB), ARID1A/BAF250A, ARID1B/BAF250B, SMARCA2/BRM, SMARCA4/BRG1, ACTL6A/BAF53, ACTL6B/BAF53B, SMARCE1/BAF57, SMARCC1/BAF155, SMARCC2/BAF170, SMARCB1/SNF5/INI1, and one or more SMARCD1/BAF60A, SMARCD2/BAF60B, or SMARCD3/BAF60C. In muscle cells, the BAF complex also contains DPF3. Component of neural progenitors-specific chromatin remodeling complex (npBAF complex) composed of at least, ARID1A/BAF250A or ARID1B/BAF250B, SMARCD1/BAF60A, SMARCD3/BAF60C, SMARCA2/BRM/BAF190B, SMARCA4/BRG1/BAF190A, SMARCB1/BAF47, SMARCC1/BAF155, SMARCE1/BAF57, SMARCC2/BAF170, PHF10/BAF45A, ACTL6A/BAF53A and actin. Component of neuron-specific chromatin remodeling complex (nBAF complex) composed of at least, ARID1A/BAF250A or ARID1B/BAF250B, SMARCD1/BAF60A, SMARCD3/BAF60C, SMARCA2/BRM/BAF190B, SMARCA4/BRG1/BAF190A, SMARCB1/BAF47, SMARCC1/BAF155, SMARCE1/BAF57, SMARCC2/BAF170, DPF1/BAF45B, DPF3/BAF45C, ACTL6B/BAF53B and actin. Component of the SWI/SNF-B (PBAF) chromatin remodeling complex, at least composed of SMARCA4/BRG1, SMARCB1/BAF47/SNF5, ACTL6A/BAF53A or ACTL6B/BAF53B, SMARCE1/BAF57, SMARCD1/BAF60A, SMARCD2/BAF60B, perhaps SMARCD3/BAF60C, SMARCC1/BAF155, SMARCC2/BAF170, PBRM1/BAF180, ARID2/BAF200 and actin. Component of SWI/SNF (GBAF) subcomplex, which includes at least BICRA or BICRAL (mutually exclusive), BRD9, SS18, SMARCA2/BRM, SMARCA4/BRG1/BAF190A, ACTL6A/BAF53, SMARCC1/BAF155, and SMARCD1/BAF60A. May also interact with the SIN3A histone deacetylase transcription repressor complex in conjunction with SMARCA2 and SMARCA4. The minimal complex composed of SMARCC1 and SMARCA4 seems to be able to associate with cyclin such as CCNE1 or transcription factors such as KLF1 or GATA1. Interacts with NR3C1 and SMARD1. Interacts with TRIP12; leading to disrupt interaction between TRIP12 and SMARCE1 and prevent SMARCE1 ubiquitination. Interacts with CEBPB (when not methylated). Interacts with KDM6B. Interacts with MKKS; the interaction takes place predominantly in the cytoplasm and may modulate SMARCC1 location. Interacts with DPF2. Interacts with PRDM1/BLIMP1. Interacts with DPF3a (isoform 2 of DPF3/BAF45C) and with HDGFL2 in a DPF3a-dependent manner. Highly expressed in adult brain, testis and thymus.

It localises to the nucleus. The protein resides in the cytoplasm. In terms of biological role, involved in transcriptional activation and repression of select genes by chromatin remodeling (alteration of DNA-nucleosome topology). Component of SWI/SNF chromatin remodeling complexes that carry out key enzymatic activities, changing chromatin structure by altering DNA-histone contacts within a nucleosome in an ATP-dependent manner. May stimulate the ATPase activity of the catalytic subunit of the complex. Belongs to the neural progenitors-specific chromatin remodeling complex (npBAF complex) and the neuron-specific chromatin remodeling complex (nBAF complex). During neural development a switch from a stem/progenitor to a postmitotic chromatin remodeling mechanism occurs as neurons exit the cell cycle and become committed to their adult state. The transition from proliferating neural stem/progenitor cells to postmitotic neurons requires a switch in subunit composition of the npBAF and nBAF complexes. As neural progenitors exit mitosis and differentiate into neurons, npBAF complexes which contain ACTL6A/BAF53A and PHF10/BAF45A, are exchanged for homologous alternative ACTL6B/BAF53B and DPF1/BAF45B or DPF3/BAF45C subunits in neuron-specific complexes (nBAF). The npBAF complex is essential for the self-renewal/proliferative capacity of the multipotent neural stem cells. The nBAF complex along with CREST plays a role regulating the activity of genes essential for dendrite growth. In Mus musculus (Mouse), this protein is SWI/SNF complex subunit SMARCC1 (Smarcc1).